Consider the following 106-residue polypeptide: uncharacterized protein (106 aa).

It is found in the mitochondrion. This is an uncharacterized protein from Claviceps purpurea (Ergot fungus).